A 149-amino-acid polypeptide reads, in one-letter code: uncharacterized protein (149 aa).

Positions 1 to 103 (MFGLKVKNAE…SPTQGSRLRH (103 aa)) are disordered. Residues 7 to 18 (KNAEADTAKSNE) show a composition bias toward basic and acidic residues. Positions 26–41 (TGSSTTSGSGQSTQRG) are enriched in low complexity. The span at 61–72 (GSQGNSGDQGTE) shows a compositional bias: polar residues.

This sequence belongs to the adhesin P1 family.

This is an uncharacterized protein from Mycoplasma pneumoniae (strain ATCC 29342 / M129 / Subtype 1) (Mycoplasmoides pneumoniae).